Reading from the N-terminus, the 444-residue chain is Shufflon protein B' (444 aa).

The interval 1 to 361 (MKKYDRGWAS…TGAILSCQSG (361 aa)) is constant region. The variable region stretch occupies residues 362 to 444 (TWRKVGSGEL…GSITVYAICQ (83 aa)).

The sequence is that of Shufflon protein B' from Escherichia coli.